The chain runs to 359 residues: DNA polymerase IV (359 aa).

One can recognise a UmuC domain in the interval 4–184; that stretch reads IVHVDMDAFY…LKVNRIPGVG (181 aa). Mg(2+) contacts are provided by D8 and D102. E103 is an active-site residue.

Belongs to the DNA polymerase type-Y family. As to quaternary structure, monomer. The cofactor is Mg(2+).

It is found in the cytoplasm. It carries out the reaction DNA(n) + a 2'-deoxyribonucleoside 5'-triphosphate = DNA(n+1) + diphosphate. Poorly processive, error-prone DNA polymerase involved in untargeted mutagenesis. Copies undamaged DNA at stalled replication forks, which arise in vivo from mismatched or misaligned primer ends. These misaligned primers can be extended by PolIV. Exhibits no 3'-5' exonuclease (proofreading) activity. May be involved in translesional synthesis, in conjunction with the beta clamp from PolIII. The sequence is that of DNA polymerase IV from Xanthomonas euvesicatoria pv. vesicatoria (strain 85-10) (Xanthomonas campestris pv. vesicatoria).